The following is a 195-amino-acid chain: Large ribosomal subunit protein bL27c (195 aa).

Residues 1 to 60 constitute a chloroplast transit peptide; it reads MASMAFTLVGAFKGMSLSSPCHSSSSASFLRADRVSLSVGGGVGMGVPMTMPVRRLTIQM.

The protein belongs to the bacterial ribosomal protein bL27 family. Part of the 50S ribosomal subunit.

It is found in the plastid. The protein localises to the chloroplast. This Oryza sativa subsp. japonica (Rice) protein is Large ribosomal subunit protein bL27c (RPL27).